A 526-amino-acid chain; its full sequence is MFNVDTPALITFILLIVVGALGGALVGYFIRVAQHEKSLRLAREEAERIIEDGKKEADRTKREMVFEAKQEILTLRKEFDEDIKDRRQIVMNLEEKATQRENALNQRSQYLDKREIGLDAKEERHNERKEQLDIQYSKVEELIKEQEEKLSSISALSREQARELIMAQVRDSISNEIAAYIRDEEDNAKSIAQNKSKEILSLAMQKYAAETTSERTVTVVEIPNEDMKGRIIGKEGRNIRSLEALTGVDLIIDDTPEAVVLSGFDPVRREVAKRALTILVQDGRIHPGRIEEVVERARTEIDMFIREAGEEAVFKTGVGKVHPDIIKLLGRMTFRTSYGQNVLKHSIEVAFLAGKLAAEIGENEMLARRAGLFHDIGKAIDHEVEGSHVSIGVELMSRYKEPKEVIDAIASHHGDSEPESIIAVLVAAADALSAARPGARSESMDSYMKRLTQLEEISNDVTGVDKAYAIQAGREVRVMVLPDKVDDLGLINIARTIKEKIEAQMTYPGTIKVTVIREKRATDVAK.

Residues 10–30 form a helical membrane-spanning segment; sequence ITFILLIVVGALGGALVGYFI. Positions 216–279 constitute a KH domain; sequence TVTVVEIPNE…EVAKRALTIL (64 aa). Residues 342–435 enclose the HD domain; the sequence is VLKHSIEVAF…VAAADALSAA (94 aa).

Belongs to the RNase Y family.

It localises to the cell membrane. Functionally, endoribonuclease that initiates mRNA decay. This is Ribonuclease Y from Acholeplasma laidlawii (strain PG-8A).